The primary structure comprises 421 residues: UDP-N-acetylglucosamine 1-carboxyvinyltransferase (421 aa).

22–23 (KN) contributes to the phosphoenolpyruvate binding site. Position 93 (R93) interacts with UDP-N-acetyl-alpha-D-glucosamine. C117 (proton donor) is an active-site residue. 2-(S-cysteinyl)pyruvic acid O-phosphothioketal is present on C117. Residues 122–126 (RPVDL), D308, and I330 each bind UDP-N-acetyl-alpha-D-glucosamine.

It belongs to the EPSP synthase family. MurA subfamily.

The protein resides in the cytoplasm. The catalysed reaction is phosphoenolpyruvate + UDP-N-acetyl-alpha-D-glucosamine = UDP-N-acetyl-3-O-(1-carboxyvinyl)-alpha-D-glucosamine + phosphate. The protein operates within cell wall biogenesis; peptidoglycan biosynthesis. Cell wall formation. Adds enolpyruvyl to UDP-N-acetylglucosamine. The protein is UDP-N-acetylglucosamine 1-carboxyvinyltransferase of Pseudomonas fluorescens (strain ATCC BAA-477 / NRRL B-23932 / Pf-5).